The following is a 229-amino-acid chain: MNVEEMKKIAAKEALKFIEDDMVIGLGTGSTTAYFIKLLGEKLKRGEISDIVGVPTSYQAKLLAIEHDIPIASLDQVDAIDVAVDGADEVDPNLNLIKGRGAALTMEKIIEYRAGTFIVLVDERKLVDYLCQKMPVPIEVIPQAWKAIIEELSIFNAKAELRMGVNKDGPVITDNGNFIIDAKFPRIDDPLDMEIELNTIPGVIENGIFADIADIVIVGTREGVKKLER.

Substrate contacts are provided by residues 28 to 31 (TGST), 85 to 88 (DGAD), and 98 to 101 (KGRG). E107 serves as the catalytic Proton acceptor. K125 contributes to the substrate binding site.

This sequence belongs to the ribose 5-phosphate isomerase family. In terms of assembly, homotetramer.

It carries out the reaction aldehydo-D-ribose 5-phosphate = D-ribulose 5-phosphate. Its pathway is carbohydrate degradation; pentose phosphate pathway; D-ribose 5-phosphate from D-ribulose 5-phosphate (non-oxidative stage): step 1/1. With respect to regulation, inhibited by D-4-phosphoerythronic acid. Functionally, involved in the first step of the non-oxidative branch of the pentose phosphate pathway. It catalyzes the reversible conversion of ribose-5-phosphate to ribulose 5-phosphate. In Pyrococcus horikoshii (strain ATCC 700860 / DSM 12428 / JCM 9974 / NBRC 100139 / OT-3), this protein is Ribose-5-phosphate isomerase A.